A 269-amino-acid polypeptide reads, in one-letter code: 3-methyl-2-oxobutanoate hydroxymethyltransferase (269 aa).

2 residues coordinate Mg(2+): aspartate 50 and aspartate 89. 3-methyl-2-oxobutanoate-binding positions include 50 to 51 (DS), aspartate 89, and lysine 119. Position 121 (glutamate 121) interacts with Mg(2+). Residue glutamate 187 is the Proton acceptor of the active site.

It belongs to the PanB family. Homodecamer; pentamer of dimers. It depends on Mg(2+) as a cofactor.

Its subcellular location is the cytoplasm. The catalysed reaction is 3-methyl-2-oxobutanoate + (6R)-5,10-methylene-5,6,7,8-tetrahydrofolate + H2O = 2-dehydropantoate + (6S)-5,6,7,8-tetrahydrofolate. It functions in the pathway cofactor biosynthesis; (R)-pantothenate biosynthesis; (R)-pantoate from 3-methyl-2-oxobutanoate: step 1/2. In terms of biological role, catalyzes the reversible reaction in which hydroxymethyl group from 5,10-methylenetetrahydrofolate is transferred onto alpha-ketoisovalerate to form ketopantoate. This Corynebacterium efficiens (strain DSM 44549 / YS-314 / AJ 12310 / JCM 11189 / NBRC 100395) protein is 3-methyl-2-oxobutanoate hydroxymethyltransferase.